Reading from the N-terminus, the 32-residue chain is Hemocyanin C chain (32 aa).

Belongs to the tyrosinase family. Hemocyanin subfamily. Hemolymph.

The protein localises to the secreted. It localises to the extracellular space. Its function is as follows. Hemocyanins are copper-containing oxygen carriers occurring freely dissolved in the hemolymph of many mollusks and arthropods. The protein is Hemocyanin C chain of Cherax destructor (Common yabby crayfish).